Reading from the N-terminus, the 593-residue chain is Glutamyl-tRNA(Gln) amidotransferase subunit B, mitochondrial (593 aa).

Residues 1-49 (MLRPWLRQSTRAARSLPCCQCPRPYSSRLPTLTSPSSSVRRLQTSASES) constitute a mitochondrion transit peptide. The segment covering 27-42 (SRLPTLTSPSSSVRRL) has biased composition (low complexity). Positions 27-80 (SRLPTLTSPSSSVRRLQTSASESQDRVPLRKQLKQNAKALKAEKRQRRESEEAS) are disordered. Residues 66–80 (LKAEKRQRRESEEAS) show a composition bias toward basic and acidic residues.

The protein belongs to the GatB/GatE family. GatB subfamily. Subunit of the heterotrimeric GatCAB amidotransferase (AdT) complex, composed of A, B and C subunits.

It localises to the mitochondrion. It catalyses the reaction L-glutamyl-tRNA(Gln) + L-glutamine + ATP + H2O = L-glutaminyl-tRNA(Gln) + L-glutamate + ADP + phosphate + H(+). Its function is as follows. Allows the formation of correctly charged Gln-tRNA(Gln) through the transamidation of misacylated Glu-tRNA(Gln) in the mitochondria. The reaction takes place in the presence of glutamine and ATP through an activated gamma-phospho-Glu-tRNA(Gln). This is Glutamyl-tRNA(Gln) amidotransferase subunit B, mitochondrial from Aspergillus oryzae (strain ATCC 42149 / RIB 40) (Yellow koji mold).